A 324-amino-acid chain; its full sequence is Biotin synthase (324 aa).

A Radical SAM core domain is found at 43-273; it reads FCGNYFNFCS…HVFLRLAGGR (231 aa). [4Fe-4S] cluster contacts are provided by Cys61, Cys65, and Cys68. [2Fe-2S] cluster is bound by residues Ser105, Cys138, Cys198, and Arg268.

The protein belongs to the radical SAM superfamily. Biotin synthase family. In terms of assembly, homodimer. [4Fe-4S] cluster is required as a cofactor. It depends on [2Fe-2S] cluster as a cofactor.

It carries out the reaction (4R,5S)-dethiobiotin + (sulfur carrier)-SH + 2 reduced [2Fe-2S]-[ferredoxin] + 2 S-adenosyl-L-methionine = (sulfur carrier)-H + biotin + 2 5'-deoxyadenosine + 2 L-methionine + 2 oxidized [2Fe-2S]-[ferredoxin]. It functions in the pathway cofactor biosynthesis; biotin biosynthesis; biotin from 7,8-diaminononanoate: step 2/2. Its function is as follows. Catalyzes the conversion of dethiobiotin (DTB) to biotin by the insertion of a sulfur atom into dethiobiotin via a radical-based mechanism. This is Biotin synthase from Campylobacter hominis (strain ATCC BAA-381 / DSM 21671 / CCUG 45161 / LMG 19568 / NCTC 13146 / CH001A).